A 350-amino-acid chain; its full sequence is uncharacterized protein (350 aa).

The OBG-type G domain occupies 171–334 (PTVVIAGYPN…LKERLKKIAI (164 aa)). GTP-binding positions include 177–184 (GYPNVGKS), 219–223 (DTPGL), and 286–289 (NKID).

It belongs to the TRAFAC class OBG-HflX-like GTPase superfamily. OBG GTPase family. NOG subfamily.

This is an uncharacterized protein from Methanocaldococcus jannaschii (strain ATCC 43067 / DSM 2661 / JAL-1 / JCM 10045 / NBRC 100440) (Methanococcus jannaschii).